The following is a 212-amino-acid chain: MKLSMKSLAALLMMLNGAVMASENVNTPENRQFLKQQENLSRQLREKPDHQLKAWAEKQVLENPLQRSDNHFLDELVRKQQASQDGKPRQGALYFVSFSIPEEGLKRMLGETRHFGIPATLRGMVNNDLKTTAEAVLSLVKDGATDGVQIDPTLFSQYGIRTVPALVVFCSQGYDIIRGNLRVGQALEKVAATGDCRQVAHDLLAGKGDSGK.

The N-terminal stretch at 1-21 is a signal peptide; sequence MKLSMKSLAALLMMLNGAVMA.

It localises to the periplasm. Essential for F plasmid conjugative transfer, participates in F-pilus assembly. This is Periplasmic protein TrbC (trbC) from Escherichia coli (strain K12).